The chain runs to 298 residues: Serine/threonine-protein kinase 1 (298 aa).

The 239-residue stretch at 38-276 (FIATRPMFEG…FKSLVSHPWF (239 aa)) folds into the Protein kinase domain. ATP contacts are provided by residues 45–53 (FEGGRNNVF) and K65. D152 (proton acceptor) is an active-site residue.

The protein belongs to the protein kinase superfamily. Ser/Thr protein kinase family.

It is found in the virion. It localises to the host cytoplasm. It catalyses the reaction L-seryl-[protein] + ATP = O-phospho-L-seryl-[protein] + ADP + H(+). The catalysed reaction is L-threonyl-[protein] + ATP = O-phospho-L-threonyl-[protein] + ADP + H(+). Its function is as follows. Essential for viral replication. It may mediate the virus' progression through DNA replication. In Ornithodoros (relapsing fever ticks), this protein is Serine/threonine-protein kinase 1.